Consider the following 102-residue polypeptide: Vesicle-associated membrane protein 5 (102 aa).

Over 1–72 (MAGKELERCQ…RWENIRCRVY (72 aa)) the chain is Cytoplasmic. One can recognise a v-SNARE coiled-coil homology domain in the interval 5-65 (ELERCQRQAD…KTLAQQKRWE (61 aa)). Residues S41, S48, and S49 each carry the phosphoserine modification. Residues 73 to 93 (LGLAVAGGLLLILVVLLVIFL) traverse the membrane as a helical; Anchor for type IV membrane protein segment. The Vesicular segment spans residues 94-102 (PSGEDSSKP).

It belongs to the synaptobrevin family.

It localises to the cell membrane. It is found in the endomembrane system. The protein localises to the golgi apparatus. The protein resides in the trans-Golgi network membrane. Functionally, may participate in trafficking events that are associated with myogenesis, such as myoblast fusion and/or GLUT4 trafficking. This is Vesicle-associated membrane protein 5 (Vamp5) from Rattus norvegicus (Rat).